The chain runs to 251 residues: MWRLLTRAPAPLWRMHFSDTWAALPTSAGLKTLLPVPTFENVSIPERSKLKFVERVPLVPKVRREPKNLKDIRGPSAEATDFTEGNFAILALGGGYLHWGHFEMMRLTINRFMDPKNMFAIWRVPAPFKPITRKGVGQRMGGGKGAIDHYVTPVKTGCLIVEMGGRCEFEEVKRVLNQVAHKLPFPAKAVSRKTLEKMHQNQKERELNNQNPWTFERIATANMFGIRKFLSPYDLTQKGRYWGKFYMPKRV.

The N-terminal 29 residues, 1-29 (MWRLLTRAPAPLWRMHFSDTWAALPTSAG), are a transit peptide targeting the mitochondrion.

It belongs to the universal ribosomal protein uL16 family. In terms of assembly, component of the mitochondrial ribosome large subunit (39S) which comprises a 16S rRNA and about 50 distinct proteins.

It is found in the mitochondrion. The sequence is that of Large ribosomal subunit protein uL16m (Mrpl16) from Rattus norvegicus (Rat).